The primary structure comprises 628 residues: Chaperone protein HtpG (628 aa).

Residues 1 to 334 are a; substrate-binding; it reads MTTIDTASET…SEDLPLNLSR (334 aa). Residues 335 to 550 form a b region; sequence EMLQNNPQLA…GFGPDRELEK (216 aa). A c region spans residues 551–628; sequence MLARANKGAA…LVLRGVVAHG (78 aa).

The protein belongs to the heat shock protein 90 family. As to quaternary structure, homodimer.

It localises to the cytoplasm. Molecular chaperone. Has ATPase activity. This chain is Chaperone protein HtpG, found in Rhodopseudomonas palustris (strain HaA2).